A 46-amino-acid chain; its full sequence is PhoP/PhoQ regulator MgrB (46 aa).

The chain crosses the membrane as a helical span at residues 6–26 (WVALVVVVLACLLLWAQVFNM).

Belongs to the MgrB family. May form homooligomers. Probably interacts with the periplasmic domain of PhoQ.

It localises to the cell inner membrane. PhoP-regulated transcription is redox-sensitive, being activated when the periplasm becomes more reducing. MgrB acts between DsbA/DsbB and PhoP/PhoQ in this pathway. Represses PhoP/PhoQ signaling, possibly by binding to the periplasmic domain of PhoQ, altering its activity and that of downstream effector PhoP. This Escherichia coli O6:K15:H31 (strain 536 / UPEC) protein is PhoP/PhoQ regulator MgrB.